The chain runs to 120 residues: Cell division protein FtsL (120 aa).

The Cytoplasmic segment spans residues 1–36; that stretch reads MTNLAVKYKQQAQEEVQIQTPPQQMAKPKVKAKITR. The helical transmembrane segment at 37 to 57 threads the bilayer; that stretch reads IEKLLYVAFIGFLLYACVAFI. Residues 58–120 lie on the Extracellular side of the membrane; the sequence is GNKAGLYQVN…INANNVKGLK (63 aa).

This sequence belongs to the FtsL family.

Its subcellular location is the cell membrane. In terms of biological role, essential cell division protein. The protein is Cell division protein FtsL of Bacillus cereus (strain ATCC 14579 / DSM 31 / CCUG 7414 / JCM 2152 / NBRC 15305 / NCIMB 9373 / NCTC 2599 / NRRL B-3711).